An 874-amino-acid polypeptide reads, in one-letter code: SGGFDFSFLPQPPQEKGVGLGPGPMGLMGPRGPPGASGAPGPQGFQGPAGEPGEPGQTGPAGARGPAGPPGKGVVGPQGARGFPGTPGLPGFKGEPGAPGENGTPGQTGARGRVGAPGPAGARGSDGSVGPVGPAGPIGSAGPPGFPGAPGPKGELGPVGNTGPSGPAGPRGEQGLPGSGPVGPPGNPGANGLTGAKGAAGLPGVAGAPGLPGPRGIPGPVGARGLVGEPGPAGSKGESGGKGEPGSAGPQGPPGSSGEEGKRGPSGESGSTGPTGPPGLRGGLPGADGRAGVMGPAGRGASGPAGVRGPSGDTGRPGEPGLMGARGLPGSPGNVGPAGKEGPAGLPGIDGRPGPIGPAGARGEAGNIGFPGPKGHAGLAGNRGEQGPAGPPGFQGLPGPAGTTGEAGKPGERGIPGEFGLPGPAGPRGERGPPGESGAVGPSGAIGSRGPSGPPGPDGNKGEPGVVGAPGTAGPAGSGGLPGERGETGLRGEVGTTGRDGARGAPGAVGAPGPAGATGDRGEAGAAGPAGPAGPRGSPGERGEVGPAGPNGFAGPAGAAGQPGAKGERGTKGPKGENGIVGPTGPVGSAGPAGPNGPAGPAGSRGDGGPPGLTGFPGAAGRTGPPGPSGITGPPGPAGKEGLRGDQGPVGRGETGAGGPPGFTGEKGPSGEPGTAGPPGTAGPQGLLGAPGILGLPGSRGERGLPGVAGAVGEPGPLGIAGPPGARGDGNPGSDGPPGRGAAGAPGPHGTVGPAGKHGNRGEPGPVGSVGPVGALGPRGPSGPQGIRGLQGLPGLAGQHGDQGSPGPVGPAGPRGPAGPSGPAGKDGRTGHPGAVGPAGIRGSQGSQGPSGPAGPPGSGGGYDFGYEGDFYRA.

The tract at residues 1–874 (SGGFDFSFLP…FGYEGDFYRA (874 aa)) is disordered. 2 positions are modified to 4-hydroxyproline: Pro10 and Pro13. Position 16 is an allysine (Lys16). Low complexity predominate over residues 27–66 (LMGPRGPPGASGAPGPQGFQGPAGEPGEPGQTGPAGARGP). A 4-hydroxyproline mark is found at Pro34 and Pro40. A 5-hydroxylysine; alternate modification is found at Lys93. Lys93 is a glycosylation site (O-linked (Gal...) hydroxylysine; alternate). 3 stretches are compositionally biased toward low complexity: residues 110–143 (ARGR…SAGP), 188–209 (PGAN…AGAP), and 218–236 (PGPV…AGSK). A compositionally biased stretch (gly residues) spans 237 to 246 (GESGGKGEPG). Over residues 247-257 (SAGPQGPPGSS) the composition is skewed to low complexity. 2 positions are modified to 4-hydroxyproline: Pro317 and Pro320. Composition is skewed to low complexity over residues 346-365 (LPGI…RGEA), 434-451 (PGES…SRGP), and 463-473 (EPGVVGAPGTA). Residues 474–483 (GPAGSGGLPG) show a composition bias toward gly residues. 2 stretches are compositionally biased toward low complexity: residues 491-538 (RGEV…PRGS) and 545-565 (VGPA…QPGA). A compositionally biased stretch (basic and acidic residues) spans 566–575 (KGERGTKGPK). Low complexity predominate over residues 583-593 (PTGPVGSAGPA). Gly residues predominate over residues 603 to 612 (GSRGDGGPPG). The span at 614 to 623 (TGFPGAAGRT) shows a compositional bias: low complexity. Gly residues predominate over residues 648 to 662 (GPVGRGETGAGGPPG). Composition is skewed to low complexity over residues 663-697 (FTGE…LGLP) and 705-724 (LPGV…AGPP). Over residues 725-744 (GARGDGNPGSDGPPGRGAAG) the composition is skewed to gly residues. 2 stretches are compositionally biased toward low complexity: residues 745–755 (APGPHGTVGPA) and 763–778 (EPGP…ALGP).

This sequence belongs to the fibrillar collagen family. As to quaternary structure, trimers of one alpha 2(I) and two alpha 1(I) chains. Interacts (via C-terminus) with TMEM131 (via PapD-L domain); the interaction is direct and is involved in assembly and TRAPPIII ER-to-Golgi transport complex-dependent secretion of collagen. In terms of processing, prolines at the third position of the tripeptide repeating unit (G-X-Y) are hydroxylated in some or all of the chains. Expressed in bones.

It localises to the secreted. It is found in the extracellular space. The protein localises to the extracellular matrix. Functionally, type I collagen is a member of group I collagen (fibrillar forming collagen). This is Collagen alpha-2(I) chain from Megalonyx jeffersonii (Jefferson's ground sloth).